We begin with the raw amino-acid sequence, 983 residues long: Type IV secretion system protein CagE (983 aa).

Residue 597–604 (GSTGSGKT) coordinates ATP.

It belongs to the TrbE/VirB4 family. As to quaternary structure, component of the Cag type IV secretion system, which is composed of a wheel-shaped outer membrane complex (OMC) and an inner membrane complex (IMC). Interacts with CagV and CagBeta.

The protein localises to the cell inner membrane. It carries out the reaction ATP + H2O + cellular proteinSide 1 = ADP + phosphate + cellular proteinSide 2.. Its function is as follows. ATPase component of the type IV secretion system Cag (Cag-T4SS). Acts as a molecular motor to provide the energy that is required for the export of proteins. Required for CagA translocation and induction of IL-8 in host gastric epithelial cells. Plays a key role in Cag-T4SS pilus biogenesis, especially in the localization and stabilization of the pilus-associated components CagI, CagL and the surface protein CagH. Is also critical for assembly of the entire cytoplasmic portion of the Cag inner membrane complex (IMC). The protein is Type IV secretion system protein CagE of Helicobacter pylori (strain ATCC 700392 / 26695) (Campylobacter pylori).